The following is a 167-amino-acid chain: Signal peptidase complex catalytic subunit SEC11 (167 aa).

The Cytoplasmic segment spans residues 1 to 12 (MNLRLELTRFLK). A helical; Signal-anchor for type II membrane protein membrane pass occupies residues 13-30 (LCFVLSSAFMFWKGLSIA). Residues 31–167 (TNSHSPIVVV…LGISALLSNE (137 aa)) lie on the Lumenal side of the membrane. Catalysis depends on charge relay system residues serine 44, histidine 83, and aspartate 109. The interval 153 to 164 (ALMGFLGISALL) is C-terminal short (CTS) helix.

It belongs to the peptidase S26B family. Component of the signal peptidase complex (SPC) composed of a catalytic subunit SEC11 and three accessory subunits SPC1, SPC2 and SPC3. The complex induces a local thinning of the ER membrane which is used to measure the length of the signal peptide (SP) h-region of protein substrates. This ensures the selectivity of the complex towards h-regions shorter than 18-20 amino acids. SPC associates with the translocon complex.

It localises to the endoplasmic reticulum membrane. The catalysed reaction is Cleavage of hydrophobic, N-terminal signal or leader sequences from secreted and periplasmic proteins.. Catalytic component of the signal peptidase complex (SPC) which catalyzes the cleavage of N-terminal signal sequences from nascent proteins as they are translocated into the lumen of the endoplasmic reticulum. Specifically cleaves N-terminal signal peptides that contain a hydrophobic alpha-helix (h-region) shorter than 18-20 amino acids. This is Signal peptidase complex catalytic subunit SEC11 (SEC11) from Zygosaccharomyces rouxii (strain ATCC 2623 / CBS 732 / NBRC 1130 / NCYC 568 / NRRL Y-229).